A 226-amino-acid chain; its full sequence is Urease accessory protein UreF (226 aa).

The protein belongs to the UreF family. UreD, UreF and UreG form a complex that acts as a GTP-hydrolysis-dependent molecular chaperone, activating the urease apoprotein by helping to assemble the nickel containing metallocenter of UreC. The UreE protein probably delivers the nickel.

Its subcellular location is the cytoplasm. Its function is as follows. Required for maturation of urease via the functional incorporation of the urease nickel metallocenter. In Burkholderia cenocepacia (strain HI2424), this protein is Urease accessory protein UreF.